The following is a 137-amino-acid chain: ATP synthase epsilon chain (137 aa).

The protein belongs to the ATPase epsilon chain family. In terms of assembly, F-type ATPases have 2 components, CF(1) - the catalytic core - and CF(0) - the membrane proton channel. CF(1) has five subunits: alpha(3), beta(3), gamma(1), delta(1), epsilon(1). CF(0) has three main subunits: a, b and c.

Its subcellular location is the cell inner membrane. Functionally, produces ATP from ADP in the presence of a proton gradient across the membrane. The polypeptide is ATP synthase epsilon chain (Yersinia pestis bv. Antiqua (strain Antiqua)).